The sequence spans 401 residues: Imidazolonepropionase (401 aa).

Fe(3+)-binding residues include His-70 and His-72. Positions 70 and 72 each coordinate Zn(2+). Residues Arg-79, Tyr-142, and His-175 each contribute to the 4-imidazolone-5-propanoate site. Tyr-142 provides a ligand contact to N-formimidoyl-L-glutamate. His-238 is a Fe(3+) binding site. His-238 provides a ligand contact to Zn(2+). Gln-241 contacts 4-imidazolone-5-propanoate. Fe(3+) is bound at residue Asp-313. Asp-313 is a binding site for Zn(2+). N-formimidoyl-L-glutamate contacts are provided by Asn-315 and Gly-317. Thr-318 is a 4-imidazolone-5-propanoate binding site.

It belongs to the metallo-dependent hydrolases superfamily. HutI family. It depends on Zn(2+) as a cofactor. Fe(3+) serves as cofactor.

Its subcellular location is the cytoplasm. The enzyme catalyses 4-imidazolone-5-propanoate + H2O = N-formimidoyl-L-glutamate. It participates in amino-acid degradation; L-histidine degradation into L-glutamate; N-formimidoyl-L-glutamate from L-histidine: step 3/3. In terms of biological role, catalyzes the hydrolytic cleavage of the carbon-nitrogen bond in imidazolone-5-propanoate to yield N-formimidoyl-L-glutamate. It is the third step in the universal histidine degradation pathway. The protein is Imidazolonepropionase of Xanthomonas euvesicatoria pv. vesicatoria (strain 85-10) (Xanthomonas campestris pv. vesicatoria).